A 508-amino-acid chain; its full sequence is Probable G-protein coupled receptor 101 (508 aa).

The Extracellular portion of the chain corresponds to 1 to 35 (MTSTCTNSTRESNSSHTCMPLSKMPISLAHGIIRS). Residues Asn7 and Asn13 are each glycosylated (N-linked (GlcNAc...) asparagine). A helical transmembrane segment spans residues 36-56 (TVLVIFLAASFVGNIVLALVL). At 57 to 68 (QRKPQLLQVTNR) the chain is on the cytoplasmic side. The helical transmembrane segment at 69-89 (FIFNLLVTDLLQISLVAPWVV) threads the bilayer. Over 90-106 (ATSVPLFWPLNSHFCTA) the chain is Extracellular. Cys104 and Cys182 form a disulfide bridge. A helical membrane pass occupies residues 107–127 (LVSLTHLFAFASVNTIVVVSV). The Cytoplasmic segment spans residues 128–149 (DRYLSIIHPLSYPSKMTQRRGY). Residues 150–170 (LLLYGTWIVAILQSTPPLYGW) form a helical membrane-spanning segment. Residues 171 to 196 (GQAAFDERNALCSMIWGASPSYTILS) are Extracellular-facing. A helical membrane pass occupies residues 197-217 (VVSFIVIPLIVMIACYSVVFC). The Cytoplasmic segment spans residues 218–399 (AARRQHALLY…PRCYQCKAAK (182 aa)). Positions 244–338 (NEDEEGAEKK…ENSMKADKGR (95 aa)) are disordered. Composition is skewed to basic and acidic residues over residues 250-288 (AEKKEEFQDESEFRRQHEGEVKAKEGRMEAKDGSLKAKE) and 318-338 (MEGKEGSTKVEENSMKADKGR). A helical membrane pass occupies residues 400–420 (VIFIIIFSYVLSLGPYCFLAV). Residues 421–433 (LAVWVDVETQVPQ) are Extracellular-facing. A helical membrane pass occupies residues 434 to 454 (WVITIIIWLFFLQCCIHPYVY). Over 455 to 508 (GYMHKTIKKEIQDMLKKFFCKEKPPKEDSHPDLPGTEGGTEGKIVPSYDSATFP) the chain is Cytoplasmic. The span at 476 to 485 (EKPPKEDSHP) shows a compositional bias: basic and acidic residues. Residues 476-508 (EKPPKEDSHPDLPGTEGGTEGKIVPSYDSATFP) form a disordered region.

Belongs to the G-protein coupled receptor 1 family.

It is found in the cell membrane. Its function is as follows. Orphan receptor. The protein is Probable G-protein coupled receptor 101 (GPR101) of Homo sapiens (Human).